The primary structure comprises 394 residues: Multidrug resistance protein D (394 aa).

The Cytoplasmic segment spans residues 1 to 8; it reads MKRQRNVN. A helical membrane pass occupies residues 9 to 29; sequence LLLMLVLLVAVGQMAQTIYIP. Topologically, residues 30–46 are periplasmic; the sequence is AIADMARDLNVREGAVQ. The helical transmembrane segment at 47–67 threads the bilayer; sequence SVMGAYLLTYGVSQLFYGPIS. At 68–73 the chain is on the cytoplasmic side; that stretch reads DRVGRR. A helical membrane pass occupies residues 74-94; it reads PVILVGMSIFMLATLVAVTTS. A topological domain (periplasmic) is located at residue serine 95. The helical transmembrane segment at 96 to 116 threads the bilayer; sequence LTVLIAASAMQGMGTGVGGVM. Topologically, residues 117–134 are cytoplasmic; that stretch reads ARTLPRDLYERTQLRHAN. A helical membrane pass occupies residues 135 to 155; sequence SLLNMGILVSPLLAPLIGGLL. The Periplasmic portion of the chain corresponds to 156-162; the sequence is DTMWNWR. A helical transmembrane segment spans residues 163-183; the sequence is ACYLFLLVLCAGVTFSMARWM. Topologically, residues 184–212 are cytoplasmic; the sequence is PETRPVDAPRTRLLTSYKTLFGNSGFNCY. The chain crosses the membrane as a helical span at residues 213 to 233; sequence LLMLIGGLAGIAAFEACSGVL. Residues 234 to 242 lie on the Periplasmic side of the membrane; that stretch reads MGAVLGLSS. Residues 243 to 263 traverse the membrane as a helical segment; that stretch reads MTVSILFILPIPAAFFGAWFA. The Cytoplasmic segment spans residues 264-276; the sequence is GRPNKRFSTLMWQ. A helical transmembrane segment spans residues 277–297; sequence SVICCLLAGLLMWIPDWFGVM. A topological domain (periplasmic) is located at residue asparagine 298. Residues 299–319 traverse the membrane as a helical segment; sequence VWTLLVPAALFFFGAGMLFPL. The Cytoplasmic segment spans residues 320-329; that stretch reads ATSGAMEPFP. The helical transmembrane segment at 330–350 threads the bilayer; it reads FLAGTAGALVGGLQNIGSGVL. Over 351 to 364 the chain is Periplasmic; it reads ASLSAMLPQTGQGS. The chain crosses the membrane as a helical span at residues 365-385; sequence LGLLMTLMGLLIVLCWLPLAT. Residues 386–394 lie on the Cytoplasmic side of the membrane; that stretch reads RMSHQGQPV.

Belongs to the major facilitator superfamily.

The protein localises to the cell inner membrane. Functionally, multidrug resistance pump that participates in a low energy shock adaptive response. The protein is Multidrug resistance protein D (emrD) of Escherichia coli (strain K12).